Consider the following 266-residue polypeptide: Hemin import ATP-binding protein HmuV (266 aa).

Residues 12 to 248 (LEASHLHYHV…ETLTQWYQAD (237 aa)) form the ABC transporter domain. 44–51 (GPNGAGKS) is a binding site for ATP.

The protein belongs to the ABC transporter superfamily. Heme (hemin) importer (TC 3.A.1.14.5) family. As to quaternary structure, the complex is composed of two ATP-binding proteins (HmuV), two transmembrane proteins (HmuU) and a solute-binding protein (HmuT).

The protein resides in the cell inner membrane. Part of the ABC transporter complex HmuTUV involved in hemin import. Responsible for energy coupling to the transport system. The polypeptide is Hemin import ATP-binding protein HmuV (Yersinia pestis bv. Antiqua (strain Antiqua)).